Reading from the N-terminus, the 81-residue chain is Large ribosomal subunit protein bL31B (81 aa).

This sequence belongs to the bacterial ribosomal protein bL31 family. Type B subfamily. As to quaternary structure, part of the 50S ribosomal subunit.

The polypeptide is Large ribosomal subunit protein bL31B (Oceanobacillus iheyensis (strain DSM 14371 / CIP 107618 / JCM 11309 / KCTC 3954 / HTE831)).